The primary structure comprises 545 residues: Chaperonin GroEL (545 aa).

ATP-binding positions include 30 to 33 (TMGP), Lys-51, 87 to 91 (DGTTT), Gly-416, 479 to 481 (NAA), and Asp-495.

This sequence belongs to the chaperonin (HSP60) family. In terms of assembly, forms a cylinder of 14 subunits composed of two heptameric rings stacked back-to-back. Interacts with the co-chaperonin GroES.

It is found in the cytoplasm. The enzyme catalyses ATP + H2O + a folded polypeptide = ADP + phosphate + an unfolded polypeptide.. Functionally, together with its co-chaperonin GroES, plays an essential role in assisting protein folding. The GroEL-GroES system forms a nano-cage that allows encapsulation of the non-native substrate proteins and provides a physical environment optimized to promote and accelerate protein folding. In Nautilia profundicola (strain ATCC BAA-1463 / DSM 18972 / AmH), this protein is Chaperonin GroEL.